The following is a 122-amino-acid chain: NADH-quinone oxidoreductase subunit A (122 aa).

The next 3 membrane-spanning stretches (helical) occupy residues 10-30 (MIVLIFLLLGILLPVVALTLG), 66-86 (IFALLFVIFDVETLFLYPWAV), and 91-111 (LGLFALIEMLIFVVMLLVGLA).

Belongs to the complex I subunit 3 family. In terms of assembly, NDH-1 is composed of 14 different subunits. Subunits NuoA, H, J, K, L, M, N constitute the membrane sector of the complex.

The protein localises to the cell membrane. The catalysed reaction is a quinone + NADH + 5 H(+)(in) = a quinol + NAD(+) + 4 H(+)(out). Functionally, NDH-1 shuttles electrons from NADH, via FMN and iron-sulfur (Fe-S) centers, to quinones in the respiratory chain. The immediate electron acceptor for the enzyme in this species is believed to be a menaquinone. Couples the redox reaction to proton translocation (for every two electrons transferred, four hydrogen ions are translocated across the cytoplasmic membrane), and thus conserves the redox energy in a proton gradient. The chain is NADH-quinone oxidoreductase subunit A from Bacillus anthracis.